The chain runs to 268 residues: NH(3)-dependent NAD(+) synthetase (268 aa).

Glycine 45–serine 52 contributes to the ATP binding site. Mg(2+) is bound at residue aspartate 51. Position 129 (arginine 129) interacts with deamido-NAD(+). Threonine 149 is an ATP binding site. Glutamate 154 is a Mg(2+) binding site. Deamido-NAD(+)-binding residues include lysine 162 and aspartate 169. ATP is bound by residues lysine 178 and threonine 200. Histidine 260 to lysine 261 serves as a coordination point for deamido-NAD(+).

This sequence belongs to the NAD synthetase family. As to quaternary structure, homodimer.

It catalyses the reaction deamido-NAD(+) + NH4(+) + ATP = AMP + diphosphate + NAD(+) + H(+). The protein operates within cofactor biosynthesis; NAD(+) biosynthesis; NAD(+) from deamido-NAD(+) (ammonia route): step 1/1. Catalyzes the ATP-dependent amidation of deamido-NAD to form NAD. Uses ammonia as a nitrogen source. The polypeptide is NH(3)-dependent NAD(+) synthetase (Halobacterium salinarum (strain ATCC 29341 / DSM 671 / R1)).